Reading from the N-terminus, the 197-residue chain is uncharacterized protein (197 aa).

This is an uncharacterized protein from Methanothermobacter thermautotrophicus (Methanobacterium thermoformicicum).